Here is a 235-residue protein sequence, read N- to C-terminus: MFNDKIIKEMFFARLHLGHFSTKWNPKMKKYVFCKQNGKYIIDLIQTVYYLKKVCNFIKKLSIEGKKILFVSARMLIVDKLKHFANVTKSFYITEDWLGGTFTNWITTKGCIDKLNYYSVDGLKLYDSLTKRERLISRKQQSKLAKYYFGIKQMKKIPDVVFLIGQSDLKKAIGECLKLNVPTISILDTDCDPTMTNFFIPANDDSISSIFFILDFVKYYMLKGGKKISKRLVFN.

The protein belongs to the universal ribosomal protein uS2 family.

The protein localises to the plastid. In Euglena longa (Euglenophycean alga), this protein is Small ribosomal subunit protein uS2c (rps2).